The following is a 141-amino-acid chain: Large ribosomal subunit protein uL11 (141 aa).

The protein belongs to the universal ribosomal protein uL11 family. Part of the ribosomal stalk of the 50S ribosomal subunit. Interacts with L10 and the large rRNA to form the base of the stalk. L10 forms an elongated spine to which L12 dimers bind in a sequential fashion forming a multimeric L10(L12)X complex. One or more lysine residues are methylated.

Forms part of the ribosomal stalk which helps the ribosome interact with GTP-bound translation factors. The protein is Large ribosomal subunit protein uL11 of Chlorobium phaeobacteroides (strain BS1).